We begin with the raw amino-acid sequence, 253 residues long: Ice-binding protein (253 aa).

The N-terminal stretch at 1 to 27 is a signal peptide; the sequence is MKTLISNSKKVLIPLIMGSIFAGNVMA. The cysteines at positions 75 and 93 are disulfide-linked. 2 short sequence motifs (ice-binding site motif (T-A/G-X-T/N)) span residues 220 to 223 and 232 to 235; these read TGTT and TAVT.

It belongs to the ice-binding protein family.

The protein localises to the secreted. Functionally, binds to the surface of ice crystals and inhibits their growth. Has ice recrystallization inhibition (RI) activity (the ability to prevent the formation of larger grains of ice at the expense of smaller grains), which may protect membranes from freezing injury. Has high thermal hysteresis (TH) activity, which is the ability to lower the freezing point of an aqueous solution below its melting point, and thus the freezing of the cell fluid can be prevented protecting the organism from ice damage. The TH activity of this protein is 3.8 degrees Celsius at 14 mM. This is Ice-binding protein from Colwellia sp.